We begin with the raw amino-acid sequence, 342 residues long: Holliday junction branch migration complex subunit RuvB (342 aa).

The large ATPase domain (RuvB-L) stretch occupies residues 1 to 184 (MEEDFNIRDH…FGINLHLEYY (184 aa)). Residues Leu23, Arg24, Gly65, Lys68, Thr69, Thr70, 131–133 (EDY), Arg174, Tyr184, and Arg221 contribute to the ATP site. Residue Thr69 participates in Mg(2+) binding. The small ATPAse domain (RuvB-S) stretch occupies residues 185-255 (DDDILSNIIS…IANYALEALN (71 aa)). A head domain (RuvB-H) region spans residues 258-342 (KYGLDEIDNK…YNSQKTLFND (85 aa)). The DNA site is built by Arg313 and Arg318.

This sequence belongs to the RuvB family. In terms of assembly, homohexamer. Forms an RuvA(8)-RuvB(12)-Holliday junction (HJ) complex. HJ DNA is sandwiched between 2 RuvA tetramers; dsDNA enters through RuvA and exits via RuvB. An RuvB hexamer assembles on each DNA strand where it exits the tetramer. Each RuvB hexamer is contacted by two RuvA subunits (via domain III) on 2 adjacent RuvB subunits; this complex drives branch migration. In the full resolvosome a probable DNA-RuvA(4)-RuvB(12)-RuvC(2) complex forms which resolves the HJ.

The protein localises to the cytoplasm. The enzyme catalyses ATP + H2O = ADP + phosphate + H(+). Its function is as follows. The RuvA-RuvB-RuvC complex processes Holliday junction (HJ) DNA during genetic recombination and DNA repair, while the RuvA-RuvB complex plays an important role in the rescue of blocked DNA replication forks via replication fork reversal (RFR). RuvA specifically binds to HJ cruciform DNA, conferring on it an open structure. The RuvB hexamer acts as an ATP-dependent pump, pulling dsDNA into and through the RuvAB complex. RuvB forms 2 homohexamers on either side of HJ DNA bound by 1 or 2 RuvA tetramers; 4 subunits per hexamer contact DNA at a time. Coordinated motions by a converter formed by DNA-disengaged RuvB subunits stimulates ATP hydrolysis and nucleotide exchange. Immobilization of the converter enables RuvB to convert the ATP-contained energy into a lever motion, pulling 2 nucleotides of DNA out of the RuvA tetramer per ATP hydrolyzed, thus driving DNA branch migration. The RuvB motors rotate together with the DNA substrate, which together with the progressing nucleotide cycle form the mechanistic basis for DNA recombination by continuous HJ branch migration. Branch migration allows RuvC to scan DNA until it finds its consensus sequence, where it cleaves and resolves cruciform DNA. This Bacteroides fragilis (strain ATCC 25285 / DSM 2151 / CCUG 4856 / JCM 11019 / LMG 10263 / NCTC 9343 / Onslow / VPI 2553 / EN-2) protein is Holliday junction branch migration complex subunit RuvB.